We begin with the raw amino-acid sequence, 886 residues long: Phycobiliprotein ApcE (886 aa).

(2R,3E)-phycocyanobilin is bound at residue Cys187. PBS-linker domains are found at residues 244–424 (DLQG…FRKV), 496–678 (QVRP…ISSK), and 695–876 (NDIQ…SVVV).

This sequence belongs to the phycobilisome linker protein family. Contains one covalently linked bilin chromophore. This protein autochromophorylates (Potential).

It localises to the plastid. Its subcellular location is the chloroplast thylakoid membrane. This protein is postulated to act both as terminal energy acceptor and as a linker polypeptide that stabilizes the phycobilisome architecture. May have intrinsic bilin lyase activity. In Porphyra purpurea (Red seaweed), this protein is Phycobiliprotein ApcE (apcE).